Consider the following 287-residue polypeptide: uncharacterized protein (287 aa).

GTP contacts are provided by residues 43–50, 90–93, and 156–159; these read GKTGAGKS, DLPG, and DKAE. Residues 48–140 form the G domain; sequence GKSSLCNALF…TDEHFYRQVI (93 aa).

It to E.coli YkfA and YeeP.

This is an uncharacterized protein from Escherichia coli (strain K12).